A 361-amino-acid chain; its full sequence is MAALSLKGIRKSYDGKQHVLHGIDVEIADGEFVVLVGPSGCGKSTLLRMIAGLETVTDGEIAIGDRVVNALEPKDRDIAMVFQNYALYPHMTVAQNMGYGLKIRGIERATIDSRVAAAAKILELEPLLARRPRELSGGQRQRVAMGRAIVREPSVFLFDEPLSNLDAKLRVQMRLEIQRLHARLATTSVYVTHDQIEAMTLAQRVIVMNRGYAEQIGAPVDVYEKPETVFVAGFIGSPAMNLMHGRLSEDGATFAVAGGGPALPVAGAPGIGTTIATGRDWVLGVRPEHMTPQPGVAQASLPVDSCELLGADNLAHGRWGNHDVVVRLPHADRPARGTALGAALPAHRLHFFDPETGKRAG.

One can recognise an ABC transporter domain in the interval 4–235; that stretch reads LSLKGIRKSY…PETVFVAGFI (232 aa). Position 37–44 (37–44) interacts with ATP; that stretch reads GPSGCGKS.

The protein belongs to the ABC transporter superfamily. sn-glycerol-3-phosphate importer (TC 3.A.1.1.3) family. The complex is composed of two ATP-binding proteins (UgpC), two transmembrane proteins (UgpA and UgpE) and a solute-binding protein (UgpB).

The protein resides in the cell inner membrane. It carries out the reaction sn-glycerol 3-phosphate(out) + ATP + H2O = sn-glycerol 3-phosphate(in) + ADP + phosphate + H(+). Functionally, part of the ABC transporter complex UgpBAEC involved in sn-glycerol-3-phosphate (G3P) import. Responsible for energy coupling to the transport system. This Burkholderia ambifaria (strain ATCC BAA-244 / DSM 16087 / CCUG 44356 / LMG 19182 / AMMD) (Burkholderia cepacia (strain AMMD)) protein is sn-glycerol-3-phosphate import ATP-binding protein UgpC.